The following is a 433-amino-acid chain: 3-phosphoshikimate 1-carboxyvinyltransferase (433 aa).

3-phosphoshikimate is bound by residues K22, S23, and R27. K22 is a phosphoenolpyruvate binding site. Phosphoenolpyruvate is bound by residues G95 and R123. Residues S167, Q169, D315, and K342 each contribute to the 3-phosphoshikimate site. Q169 is a phosphoenolpyruvate binding site. D315 serves as the catalytic Proton acceptor. R346 and R387 together coordinate phosphoenolpyruvate.

It belongs to the EPSP synthase family. Monomer.

It localises to the cytoplasm. It catalyses the reaction 3-phosphoshikimate + phosphoenolpyruvate = 5-O-(1-carboxyvinyl)-3-phosphoshikimate + phosphate. The protein operates within metabolic intermediate biosynthesis; chorismate biosynthesis; chorismate from D-erythrose 4-phosphate and phosphoenolpyruvate: step 6/7. Its function is as follows. Catalyzes the transfer of the enolpyruvyl moiety of phosphoenolpyruvate (PEP) to the 5-hydroxyl of shikimate-3-phosphate (S3P) to produce enolpyruvyl shikimate-3-phosphate and inorganic phosphate. This is 3-phosphoshikimate 1-carboxyvinyltransferase from Legionella pneumophila (strain Corby).